Reading from the N-terminus, the 204-residue chain is Small ribosomal subunit protein uS4 (204 aa).

Residues 93–156 (SRLSSVLYHS…AKIPVIVEAV (64 aa)) form the S4 RNA-binding domain.

Belongs to the universal ribosomal protein uS4 family. As to quaternary structure, part of the 30S ribosomal subunit. Contacts protein S5. The interaction surface between S4 and S5 is involved in control of translational fidelity.

Functionally, one of the primary rRNA binding proteins, it binds directly to 16S rRNA where it nucleates assembly of the body of the 30S subunit. With S5 and S12 plays an important role in translational accuracy. The protein is Small ribosomal subunit protein uS4 of Wolbachia sp. subsp. Brugia malayi (strain TRS).